The sequence spans 238 residues: MECVEAFLGDFSVDDLLDLSNADTSLESSSSQRKEDEQEREKFKSFSDQSTRLSPPEDLLSFPGDAPVGDLEDLEWLSNFVEDSFSESYISSDFPVNPVASVEVRRQCVPVKPRSKRRRTNGRIWSMESPSPLLSTAVARRKKRGRQKVDASYGGVVQQQQLRRCCSHCGVQKTPQWRMGPLGAKTLCNACGVRFKSGRLLPEYRPACSPTFTNEIHSNSHRKVLELRLMKVADPARV.

Positions Thr-24 to Gly-64 are disordered. Residues Gln-32–Ser-45 show a composition bias toward basic and acidic residues. Residues Lys-112 to Arg-119 carry the Nuclear localization signal motif. Residues Gln-160–Asn-214 form a GATA-type zinc finger.

It belongs to the type IV zinc-finger family. Class A subfamily.

It is found in the nucleus. Functionally, transcriptional activator that specifically binds 5'-GATA-3' or 5'-GAT-3' motifs within gene promoters. May be involved in the regulation of some light-responsive genes. The sequence is that of GATA transcription factor 7 (GATA7) from Arabidopsis thaliana (Mouse-ear cress).